Here is a 191-residue protein sequence, read N- to C-terminus: MAAYSYRPGPGAGPGPAAGAALPDQSFLWNVFQRVDKDRSGVISDNELQQALSNGTWTPFNPVTVRSIISMFDRENKAGVNFSEFTGVWKYITDWQNVFRTYDRDNSGMIDKHELKQALSGFGYRLSDQFHDILIRKFDRQGRGQIAFDDFIQGCIVLQRLTDIFRRYDTDQDGWIQVSYEQYLSMVFSIV.

Alanine 2 carries the post-translational modification N-acetylalanine. 5 consecutive EF-hand domains span residues 23-58 (PDQSFLWNVFQRVDKDRSGVISDNELQQALSNGTWT), 59-89 (PFNPVTVRSIISMFDRENKAGVNFSEFTGVW), 90-125 (KYITDWQNVFRTYDRDNSGMIDKHELKQALSGFGYR), 126-161 (LSDQFHDILIRKFDRQGRGQIAFDDFIQGCIVLQRL), and 162-191 (TDIFRRYDTDQDGWIQVSYEQYLSMVFSIV). Positions 36, 38, 40, 42, and 47 each coordinate Ca(2+). Ca(2+)-binding residues include aspartate 103, aspartate 105, serine 107, methionine 109, and glutamate 114. The Mg(2+) site is built by aspartate 169, aspartate 171, aspartate 173, and tryptophan 175.

As to quaternary structure, homodimer and heterodimer; heterodimerizes (via the EF-hand 5) with PEF1. Isoform 1 and isoform 2 self-associate; probably forming homodimers. Interacts with CPNE4 (via VWFA domain). Interacts with PDCD6IP; the interaction is calcium-dependent. Interacts with RBM22. Interacts with PLSCR4. Interacts with ANXA7 and TSG101. Interacts with DAPK1. Interacts with SEC31A; the interaction is calcium-dependent and promotes monoubiquitination of SEC31A. Interacts with ANXA11 (via N-terminus); the interaction is calcium-dependent. Interacts with PLSCR3 (via N-terminus); the interaction is calcium-dependent. Interacts with MCOLN1; the interaction is calcium-dependent. Interacts with KDR; the interaction is calcium-dependent. Interacts with HEBP2; the interaction is calcium-dependent. Interacts with TFG. Isoform 1: Interacts with SHISA5, leading to stabilize it. Isoform 2: Does not interact with SHISA5. Isoform 2: Does not interact with PDCD6IP, TSG101, ANXA7 and ANXA11.

It localises to the endoplasmic reticulum membrane. The protein resides in the cytoplasmic vesicle. Its subcellular location is the COPII-coated vesicle membrane. The protein localises to the cytoplasm. It is found in the nucleus. It localises to the endosome. In terms of biological role, calcium sensor that plays a key role in processes such as endoplasmic reticulum (ER)-Golgi vesicular transport, endosomal biogenesis or membrane repair. Acts as an adapter that bridges unrelated proteins or stabilizes weak protein-protein complexes in response to calcium: calcium-binding triggers exposure of apolar surface, promoting interaction with different sets of proteins thanks to 3 different hydrophobic pockets, leading to translocation to membranes. Involved in ER-Golgi transport. Regulates ER-Golgi transport by promoting the association between PDCD6IP and TSG101, thereby bridging together the ESCRT-III and ESCRT-I complexes. Together with PEF1, acts as a calcium-dependent adapter for the BCR(KLHL12) complex, a complex involved in ER-Golgi transport by regulating the size of COPII coats. In response to cytosolic calcium increase, the heterodimer formed with PEF1 interacts with, and bridges together the BCR(KLHL12) complex and SEC31 (SEC31A or SEC31B), promoting monoubiquitination of SEC31 and subsequent collagen export, which is required for neural crest specification. Involved in the regulation of the distribution and function of MCOLN1 in the endosomal pathway. Promotes localization and polymerization of TFG at endoplasmic reticulum exit site. Required for T-cell receptor-, Fas-, and glucocorticoid-induced apoptosis. May mediate Ca(2+)-regulated signals along the death pathway: interaction with DAPK1 can accelerate apoptotic cell death by increasing caspase-3 activity. Its role in apoptosis may however be indirect, as suggested by knockout experiments. May inhibit KDR/VEGFR2-dependent angiogenesis; the function involves inhibition of VEGF-induced phosphorylation of the Akt signaling pathway. Has a lower Ca(2+) affinity than isoform 1. The polypeptide is Programmed cell death protein 6 (Rattus norvegicus (Rat)).